The chain runs to 162 residues: Peroxiredoxin-2C (162 aa).

Residues 4–162 form the Thioredoxin domain; sequence ITVGDVVPDG…SSAEDILKAL (159 aa). Cys51 serves as the catalytic Cysteine sulfenic acid (-SOH) intermediate.

This sequence belongs to the peroxiredoxin family. Prx5 subfamily. In terms of assembly, monomer. Highly expressed in buds and flowers. Slightly expressed in green tissues. Also detected in pollen.

It is found in the cytoplasm. It carries out the reaction [glutaredoxin]-dithiol + a hydroperoxide = [glutaredoxin]-disulfide + an alcohol + H2O. Thiol-specific peroxidase that catalyzes the reduction of hydrogen peroxide and organic hydroperoxides to water and alcohols, respectively. Plays a role in cell protection against oxidative stress by detoxifying peroxides and as sensor of hydrogen peroxide-mediated signaling events. This chain is Peroxiredoxin-2C (PRXIIC), found in Arabidopsis thaliana (Mouse-ear cress).